A 438-amino-acid chain; its full sequence is Glycogen synthase (438 aa).

Lysine 16 serves as a coordination point for ADP-alpha-D-glucose.

This sequence belongs to the glycosyltransferase 1 family. Bacterial/plant glycogen synthase subfamily.

It carries out the reaction [(1-&gt;4)-alpha-D-glucosyl](n) + ADP-alpha-D-glucose = [(1-&gt;4)-alpha-D-glucosyl](n+1) + ADP + H(+). It functions in the pathway glycan biosynthesis; glycogen biosynthesis. Functionally, synthesizes alpha-1,4-glucan chains using ADP-glucose. This Thermus caldophilus protein is Glycogen synthase.